We begin with the raw amino-acid sequence, 366 residues long: Mannonate dehydratase (366 aa).

The protein belongs to the mannonate dehydratase family. It depends on Fe(2+) as a cofactor. The cofactor is Mn(2+).

It catalyses the reaction D-mannonate = 2-dehydro-3-deoxy-D-gluconate + H2O. It functions in the pathway carbohydrate metabolism; pentose and glucuronate interconversion. Catalyzes the dehydration of D-mannonate. This Streptococcus suis (strain 98HAH33) protein is Mannonate dehydratase.